Reading from the N-terminus, the 1175-residue chain is Structural maintenance of chromosomes protein 2-1 (1175 aa).

In terms of domain architecture, Zinc-hook spans 2 to 1161; it reads HIKEICLEGF…NVLFRTKFVD (1160 aa). Position 32 to 39 (32 to 39) interacts with ATP; sequence GLNGSGKS. A coiled-coil region spans residues 172 to 508; that stretch reads RMYENKKEAA…AQLANFQFTY (337 aa). Positions 518–638 constitute an SMC hinge domain; sequence SKVKGVVAKL…KTTDVAKEVA (121 aa). Residues 673 to 1028 adopt a coiled-coil conformation; that stretch reads LRKLHDLAEA…ELDEKKKETL (356 aa).

The protein belongs to the SMC family. SMC2 subfamily. In terms of assembly, forms a heterodimer with SMC4. Component of the condensin complex, which contains the SMC2 and SMC4 heterodimer, and three non SMC subunits that probably regulate the complex: CAPH, CAPD2 and CAPG. As to expression, highly expressed in roots and young floral buds.

It is found in the nucleus. Central component of the condensin complex, a complex required for conversion of interphase chromatin into mitotic-like condense chromosomes. The condensin complex probably introduces positive supercoils into relaxed DNA in the presence of type I topoisomerases and converts nicked DNA into positive knotted forms in the presence of type II topoisomerases. Also involved in chromosome segregation in meiosis. This chain is Structural maintenance of chromosomes protein 2-1 (SMC2-1), found in Arabidopsis thaliana (Mouse-ear cress).